A 517-amino-acid polypeptide reads, in one-letter code: 2-isopropylmalate synthase (517 aa).

Residues 6–267 (IIVFDTTLRD…YTTINTPEIY (262 aa)) enclose the Pyruvate carboxyltransferase domain. 4 residues coordinate Mn(2+): Asp15, His201, His203, and Asn237. A regulatory domain region spans residues 393–517 (DLIGLQISDC…RLSKSSEHQV (125 aa)).

It belongs to the alpha-IPM synthase/homocitrate synthase family. LeuA type 1 subfamily. Homodimer. Requires Mn(2+) as cofactor.

The protein resides in the cytoplasm. It catalyses the reaction 3-methyl-2-oxobutanoate + acetyl-CoA + H2O = (2S)-2-isopropylmalate + CoA + H(+). It functions in the pathway amino-acid biosynthesis; L-leucine biosynthesis; L-leucine from 3-methyl-2-oxobutanoate: step 1/4. Catalyzes the condensation of the acetyl group of acetyl-CoA with 3-methyl-2-oxobutanoate (2-ketoisovalerate) to form 3-carboxy-3-hydroxy-4-methylpentanoate (2-isopropylmalate). This Aliarcobacter butzleri (strain RM4018) (Arcobacter butzleri) protein is 2-isopropylmalate synthase.